The chain runs to 218 residues: Monomethylamine corrinoid protein 1 (218 aa).

Positions 1–91 constitute a B12-binding N-terminal domain; the sequence is MANQEIFDKL…ELEKTKVEGE (91 aa). The region spanning 94–218 is the B12-binding domain; that stretch reads TGLAITFVAE…AAKVALNIMK (125 aa). His107 contributes to the methylcob(III)alamin binding site.

This sequence belongs to the methylamine corrinoid protein family. Can form a complex with MtmB.

The protein operates within one-carbon metabolism; methanogenesis from methylamine. In terms of biological role, acts as a methyl group carrier between MtmB and MtbA. The sequence is that of Monomethylamine corrinoid protein 1 (mtmC1) from Methanosarcina mazei (strain ATCC BAA-159 / DSM 3647 / Goe1 / Go1 / JCM 11833 / OCM 88) (Methanosarcina frisia).